The chain runs to 588 residues: Calcium/calmodulin-dependent protein kinase kinase 2 (588 aa).

A compositionally biased stretch (polar residues) spans 1–14 (MSSCVSSQPSSNRA). Disordered stretches follow at residues 1–33 (MSSCVSSQPSSNRAAPQDELGGRGSSSSESQKP) and 78–100 (GQEVPLDTSGSQARPHLSGRKLS). Ser2 is modified (N-acetylserine). Phosphoserine is present on residues Ser100, Ser114, Ser129, Ser133, and Ser137. The span at 128–139 (YSPVSSPQSSPR) shows a compositional bias: low complexity. Residues 128–149 (YSPVSSPQSSPRLPRRPTVESH) are disordered. One can recognise a Protein kinase domain in the interval 165 to 446 (YTLKDEIGKG…VPEIKLHPWV (282 aa)). Residues 171-179 (IGKGSYGVV) and Lys194 each bind ATP. Residues 204-226 (QAGFPRRPPPRGTRPAPGGCIQP) are RP domain. The disordered stretch occupies residues 205–225 (AGFPRRPPPRGTRPAPGGCIQ). The active-site Proton acceptor is the Asp312. Residues 472 to 477 (ENSVKH) form an autoinhibitory domain region. Positions 475-500 (VKHIPSLATVILVKTMIRKRSFGNPF) are calmodulin-binding. Pro479, Ser495, Ser511, Thr522, and Ser572 each carry phosphoserine. A disordered region spans residues 497 to 588 (GNPFEGSRRE…LRPEEAMEPE (92 aa)). Residues 521 to 536 (PTRECESLSELKEARQ) show a composition bias toward basic and acidic residues. Residues 579 to 588 (LRPEEAMEPE) show a composition bias toward basic and acidic residues.

The protein belongs to the protein kinase superfamily. Ser/Thr protein kinase family. As to quaternary structure, interacts with calmodulin. In terms of processing, autophosphorylated and phosphorylated by PKA. Each isoform may show a different pattern of phosphorylation. In terms of tissue distribution, ubiquitously expressed with higher levels in the brain. Intermediate levels are detected in spleen, prostate, thyroid and leukocytes. The lowest level is in lung.

The protein resides in the nucleus. The protein localises to the cytoplasm. It localises to the cell projection. It is found in the neuron projection. The enzyme catalyses L-seryl-[protein] + ATP = O-phospho-L-seryl-[protein] + ADP + H(+). It carries out the reaction L-threonyl-[protein] + ATP = O-phospho-L-threonyl-[protein] + ADP + H(+). Activated by Ca(2+)/calmodulin. Binding of calmodulin may relieve intrasteric autoinhibition. Autophosphorylation does not alter activity or regulation by Ca(2+)/calmodulin. In part, activity is independent on Ca(2+)/calmodulin. In terms of biological role, calcium/calmodulin-dependent protein kinase belonging to a proposed calcium-triggered signaling cascade involved in a number of cellular processes. Isoform 1, isoform 2 and isoform 3 phosphorylate CAMK1 and CAMK4. Isoform 3 phosphorylates CAMK1D. Isoform 4, isoform 5 and isoform 6 lacking part of the calmodulin-binding domain are inactive. Efficiently phosphorylates 5'-AMP-activated protein kinase (AMPK) trimer, including that consisting of PRKAA1, PRKAB1 and PRKAG1. This phosphorylation is stimulated in response to Ca(2+) signals. Seems to be involved in hippocampal activation of CREB1. May play a role in neurite growth. Isoform 3 may promote neurite elongation, while isoform 1 may promoter neurite branching. This Homo sapiens (Human) protein is Calcium/calmodulin-dependent protein kinase kinase 2 (CAMKK2).